Consider the following 395-residue polypeptide: Argininosuccinate synthase (395 aa).

An ATP-binding site is contributed by 8–16 (AYSGGLDTS). L-citrulline-binding residues include Tyr-86 and Ser-91. Residue Gly-116 coordinates ATP. L-aspartate-binding residues include Thr-118, Asn-122, and Asp-123. Asn-122 lines the L-citrulline pocket. L-citrulline contacts are provided by Arg-126, Ser-172, Ser-181, Glu-257, and Tyr-269.

The protein belongs to the argininosuccinate synthase family. Type 1 subfamily. Homotetramer.

Its subcellular location is the cytoplasm. It catalyses the reaction L-citrulline + L-aspartate + ATP = 2-(N(omega)-L-arginino)succinate + AMP + diphosphate + H(+). It functions in the pathway amino-acid biosynthesis; L-arginine biosynthesis; L-arginine from L-ornithine and carbamoyl phosphate: step 2/3. The sequence is that of Argininosuccinate synthase from Methanosarcina barkeri (strain Fusaro / DSM 804).